A 1385-amino-acid polypeptide reads, in one-letter code: Serine-aspartate repeat-containing protein D (1385 aa).

A signal peptide spans 1–35; it reads MLNRENKTAITRKGMVSNRLNKFSIRKYTVGTASI. The YSIRK-G/S signaling motif signature appears at 23–34; that stretch reads FSIRKYTVGTAS. The ligand binding A region stretch occupies residues 36–568; that stretch reads LVGTTLIFGL…NNQSGGAGQE (533 aa). Disordered regions lie at residues 54-162 and 200-224; these read ESTN…DLLE and ETLV…KSTA. 2 stretches are compositionally biased toward polar residues: residues 62 to 71 and 94 to 109; these read EATTSASDNQ and EMVS…NGNK. Residues 130–145 are compositionally biased toward basic and acidic residues; the sequence is KSDEQASPKSTNEDLN. Residues 146–155 are compositionally biased toward polar residues; that stretch reads TKQTISNQEG. Residues 205-214 are compositionally biased toward low complexity; the sequence is NNSNSNNENN. 5 consecutive CNA-B domains span residues 569 to 680, 681 to 791, 792 to 901, 902 to 1012, and 1013 to 1123; these read VYKI…IYKP, KYNL…YKTP, KYNL…FYKP, TYNL…YKTP, and KYSL…EEET. 3 disordered regions span residues 856–886, 972–992, and 1077–1361; these read FETP…TGVI, YTPT…GLTT, and FEKP…SNNA. 2 stretches are compositionally biased toward polar residues: residues 860 to 869 and 972 to 981; these read SGYTPTQVGS and YTPTSVTSGN. A compositionally biased stretch (low complexity) spans 1081–1090; sequence TGLTQTGTNT. 2 stretches are compositionally biased toward acidic residues: residues 1091-1101 and 1118-1324; these read TEDDKDADGGE and YYEE…DSDS. The LPXTG sorting signal motif lies at 1348 to 1352; it reads LPETG. At Thr1351 the chain carries Pentaglycyl murein peptidoglycan amidated threonine. Residues 1352–1385 constitute a propeptide, removed by sortase; that stretch reads GNENSGSNNATLFGGLFAALGSLLLFGRRKKQNK.

It belongs to the serine-aspartate repeat-containing protein (SDr) family. Interacts with host DSG1; this interaction increases S.aureus adherence to keratinocytes.

The protein resides in the secreted. Its subcellular location is the cell wall. In terms of biological role, cell surface-associated calcium-binding protein which plays an important role in adhesion and pathogenesis. Mediates interactions with components of the extracellular matrix such as host DSG1 to promote bacterial adhesion to host cells. Contributes to the resistance to killing by innate immune components such as neutrophils present in blood and thus attenuates bacterial clearance. This is Serine-aspartate repeat-containing protein D (sdrD) from Staphylococcus aureus (strain Mu50 / ATCC 700699).